We begin with the raw amino-acid sequence, 208 residues long: Ribonuclease HII (208 aa).

One can recognise an RNase H type-2 domain in the interval 13-202; it reads DLVAGVDEVG…VRQAYEAREA (190 aa). A divalent metal cation contacts are provided by D19, E20, and D111.

It belongs to the RNase HII family. Mn(2+) is required as a cofactor. Requires Mg(2+) as cofactor.

It is found in the cytoplasm. It catalyses the reaction Endonucleolytic cleavage to 5'-phosphomonoester.. Endonuclease that specifically degrades the RNA of RNA-DNA hybrids. The sequence is that of Ribonuclease HII from Pseudomonas fluorescens (strain ATCC BAA-477 / NRRL B-23932 / Pf-5).